The sequence spans 407 residues: O-antigen polymerase (407 aa).

Transmembrane regions (helical) follow at residues 2-22 (LIIS…TLSV), 31-51 (VMVP…GIFV), 63-83 (YLFF…SYLY), 101-121 (YVFT…PVLM), 141-161 (YGIY…CAFF), 168-185 (LFCI…FLHG), 190-204 (IFSI…LSYI), 211-231 (FMFL…FFAY), 319-339 (ADFG…KGVL), 356-376 (FIMF…GWLF), and 382-402 (IAFM…RFVL).

Its subcellular location is the cell inner membrane. It carries out the reaction n lipid-linked O-antigen repeat units = a lipid-linked O antigen + (n-1) polyisoprenyl diphosphate.. It participates in bacterial outer membrane biogenesis; LPS O-antigen biosynthesis. Its function is as follows. Polymerase involved in the biosynthesis of the lipopolysaccharide (LPS). Catalyzes the polymerization of the O-antigen repeat units on the periplasmic face of the inner membrane, leading to the formation of the lipid-linked O-antigen molecule. The polypeptide is O-antigen polymerase (rfc) (Salmonella typhi).